Consider the following 257-residue polypeptide: Galactitol 2-dehydrogenase (257 aa).

NAD(+)-binding positions include 21–23 (RAI), 67–68 (DV), Asn94, Tyr162, and Lys166. Residue Tyr162 is the Proton acceptor of the active site.

It belongs to the short-chain dehydrogenases/reductases (SDR) family. In terms of assembly, homotetramer. The cofactor is Mg(2+).

The enzyme catalyses galactitol + NAD(+) = keto-D-tagatose + NADH + H(+). Its function is as follows. Catalyzes the oxidation of galactitol to D-tagatose. Also catalyzes the oxidation of a wide range of substrates, including polyvalent aliphatic alcohols and polyols, to the corresponding ketones and ketoses. Galactitol is the preferred substrate. This Rhizobium johnstonii (strain DSM 114642 / LMG 32736 / 3841) (Rhizobium leguminosarum bv. viciae) protein is Galactitol 2-dehydrogenase.